The chain runs to 172 residues: Disulfide bond formation protein B (172 aa).

The Cytoplasmic segment spans residues 1 to 11 (MNPFRWSFRAQ). The helical transmembrane segment at 12–28 (FLLGFLACAGLLAYAIY) threads the bilayer. The Periplasmic portion of the chain corresponds to 29-46 (VQLHLGLEPCPLCIFQRI). C38 and C41 are oxidised to a cystine. The chain crosses the membrane as a helical span at residues 47 to 63 (AFAALAVFFLLGALHGP). Over 64-70 (RAAAGRK) the chain is Cytoplasmic. The chain crosses the membrane as a helical span at residues 71–88 (VYGVLSFIAAGVGMGIAA). Residues 89 to 145 (RHVWVQIRPKDMMSSCGPPLSFLSETMGPFEVFRTVLTGTGDCGNIDWRFLGLSMPM) are Periplasmic-facing. The cysteines at positions 104 and 131 are disulfide-linked. The chain crosses the membrane as a helical span at residues 146 to 164 (WSMVWFVGLALWALYAGFK). Residues 165–172 (VRRSSVHH) lie on the Cytoplasmic side of the membrane.

The protein belongs to the DsbB family.

The protein resides in the cell inner membrane. Functionally, required for disulfide bond formation in some periplasmic proteins. Acts by oxidizing the DsbA protein. This is Disulfide bond formation protein B from Xanthomonas axonopodis pv. citri (strain 306).